The primary structure comprises 510 residues: NAD(P)H-quinone oxidoreductase subunit 2, chloroplastic (510 aa).

Helical transmembrane passes span 24-44, 59-79, 99-119, 124-144, 149-169, 183-203, 229-249, 295-315, 323-343, 354-374, 395-415, and 418-438; these read LLLF…GLIL, WFYF…LFRW, IFQF…VEYI, MAIT…MFLC, LITI…LSGY, YLLM…WLYG, ISIA…PAPF, WHLL…LIAI, MLAY…IVGD, YMLF…LFGL, ALSS…AGFF, and LYLF…IGLL.

Belongs to the complex I subunit 2 family. In terms of assembly, NDH is composed of at least 16 different subunits, 5 of which are encoded in the nucleus.

Its subcellular location is the plastid. The protein localises to the chloroplast thylakoid membrane. It carries out the reaction a plastoquinone + NADH + (n+1) H(+)(in) = a plastoquinol + NAD(+) + n H(+)(out). The enzyme catalyses a plastoquinone + NADPH + (n+1) H(+)(in) = a plastoquinol + NADP(+) + n H(+)(out). Its function is as follows. NDH shuttles electrons from NAD(P)H:plastoquinone, via FMN and iron-sulfur (Fe-S) centers, to quinones in the photosynthetic chain and possibly in a chloroplast respiratory chain. The immediate electron acceptor for the enzyme in this species is believed to be plastoquinone. Couples the redox reaction to proton translocation, and thus conserves the redox energy in a proton gradient. This Ananas comosus (Pineapple) protein is NAD(P)H-quinone oxidoreductase subunit 2, chloroplastic.